Reading from the N-terminus, the 571-residue chain is Proline--tRNA ligase (571 aa).

It belongs to the class-II aminoacyl-tRNA synthetase family. ProS type 1 subfamily. As to quaternary structure, homodimer.

The protein localises to the cytoplasm. The catalysed reaction is tRNA(Pro) + L-proline + ATP = L-prolyl-tRNA(Pro) + AMP + diphosphate. Functionally, catalyzes the attachment of proline to tRNA(Pro) in a two-step reaction: proline is first activated by ATP to form Pro-AMP and then transferred to the acceptor end of tRNA(Pro). As ProRS can inadvertently accommodate and process non-cognate amino acids such as alanine and cysteine, to avoid such errors it has two additional distinct editing activities against alanine. One activity is designated as 'pretransfer' editing and involves the tRNA(Pro)-independent hydrolysis of activated Ala-AMP. The other activity is designated 'posttransfer' editing and involves deacylation of mischarged Ala-tRNA(Pro). The misacylated Cys-tRNA(Pro) is not edited by ProRS. The protein is Proline--tRNA ligase of Pseudomonas aeruginosa (strain LESB58).